Here is a 430-residue protein sequence, read N- to C-terminus: Histidine--tRNA ligase (430 aa).

It belongs to the class-II aminoacyl-tRNA synthetase family. As to quaternary structure, homodimer.

It localises to the cytoplasm. It catalyses the reaction tRNA(His) + L-histidine + ATP = L-histidyl-tRNA(His) + AMP + diphosphate + H(+). This Chlorobium limicola (strain DSM 245 / NBRC 103803 / 6330) protein is Histidine--tRNA ligase.